A 1082-amino-acid chain; its full sequence is MAAFKPNPINYILGLDIGIASVGWAMVEIDEDENPICLIDLGVRVFERAEVPKTGDSLAMARRLARSVRRLTRRRAHRLLRARRLLKREGVLQAADFDENGLIKSLPNTPWQLRAAALDRKLTPLEWSAVLLHLIKHRGYLSQRKNEGETADKELGALLKGVADNAHALQTGDFRTPAELALNKFEKESGHIRNQRGDYSHTFSRKDLQAELILLFEKQKEFGNPHVSGGLKEGIETLLMTQRPALSGDAVQKMLGHCTFEPAEPKAAKNTYTAERFIWLTKLNNLRILEQGSERPLTDTERATLMDEPYRKSKLTYAQARKLLGLEDTAFFKGLRYGKDNAEASTLMEMKAYHAISRALEKEGLKDKKSPLNLSPELQDEIGTAFSLFKTDEDITGRLKDRIQPEILEALLKHISFDKFVQISLKALRRIVPLMEQGKRYDEACAEIYGDHYGKKNTEEKIYLPPIPADEIRNPVVLRALSQARKVINGVVRRYGSPARIHIETAREVGKSFKDRKEIEKRQEENRKDREKAAAKFREYFPNFVGEPKSKDILKLRLYEQQHGKCLYSGKEINLGRLNEKGYVEIDHALPFSRTWDDSFNNKVLVLGSENQNKGNQTPYEYFNGKDNSREWQEFKARVETSRFPRSKKQRILLQKFDEDGFKERNLNDTRYVNRFLCQFVADRMRLTGKGKKRVFASNGQITNLLRGFWGLRKVRAENDRHHALDAVVVACSTVAMQQKITRFVRYKEMNAFDGKTIDKETGEVLHQKTHFPQPWEFFAQEVMIRVFGKPDGKPEFEEADTPEKLRTLLAEKLSSRPEAVHEYVTPLFVSRAPNRKMSGQGHMETVKSAKRLDEGVSVLRVPLTQLKLKDLEKMVNREREPKLYEALKARLEAHKDDPAKAFAEPFYKYDKAGNRTQQVKAVRVEQVQKTGVWVRNHNGIADNATMVRVDVFEKGDKYYLVPIYSWQVAKGILPDRAVVQGKDEEDWQLIDDSFNFKFSLHPNDLVEVITKKARMFGYFASCHRGTGNINIRIHDLDHKIGKNGILEGIGVKTALSFQKYQIDELGKEIRPCRLKKRPPVR.

Catalysis depends on aspartate 16, which acts as the For RuvC-like nuclease domain. The Mg(2+) site is built by aspartate 16, glutamate 504, and glutamate 508. In terms of domain architecture, HNH Cas9-type spans 512-667 (SFKDRKEIEK…DEDGFKERNL (156 aa)). Catalysis depends on histidine 588, which acts as the Proton acceptor for HNH nuclease domain. Histidine 723 provides a ligand contact to Mg(2+).

It belongs to the CRISPR-associated protein Cas9 family. Subtype II-C subfamily. Monomer. Binds crRNA and tracrRNA. Requires Mg(2+) as cofactor.

Functionally, CRISPR (clustered regularly interspaced short palindromic repeat) is an adaptive immune system that provides protection against mobile genetic elements (viruses, transposable elements and conjugative plasmids). CRISPR clusters contain spacers, sequences complementary to antecedent mobile elements, and target invading nucleic acids. CRISPR clusters are transcribed and processed into CRISPR RNA (crRNA). In type II CRISPR systems correct processing of pre-crRNA requires a trans-encoded small RNA (tracrRNA), endogenous ribonuclease 3 (rnc) and this protein. The tracrRNA serves as a guide for ribonuclease 3-aided processing of pre-crRNA. Subsequently Cas9/crRNA/tracrRNA endonucleolytically cleaves linear or circular dsDNA target complementary to the spacer; Cas9 is inactive in the absence of the 2 guide RNAs (gRNA). Cas9 recognizes the protospacer adjacent motif (PAM) in the CRISPR repeat sequences to help distinguish self versus nonself, as targets within the bacterial CRISPR locus do not have PAMs. PAM recognition is also required for catalytic activity. Cuts target DNA in Cas9:gRNAs mixing experiments with C.jejuni strain NCTC 11168 and P.multocoda strain Pm70. This chain is CRISPR-associated endonuclease Cas9, found in Neisseria meningitidis serogroup A / serotype 4A (strain DSM 15465 / Z2491).